Here is a 401-residue protein sequence, read N- to C-terminus: Phosphoglycerate kinase (401 aa).

Substrate contacts are provided by residues 21 to 23, Arg36, 59 to 62, Arg116, and Arg156; these read DLN and HQGR. Residues Glu331 and 357 to 360 contribute to the ATP site; that span reads GGDT.

Belongs to the phosphoglycerate kinase family.

The protein resides in the cytoplasm. The enzyme catalyses (2R)-3-phosphoglycerate + ATP = (2R)-3-phospho-glyceroyl phosphate + ADP. It participates in carbohydrate degradation; glycolysis; pyruvate from D-glyceraldehyde 3-phosphate: step 2/5. This is Phosphoglycerate kinase (pgk) from Haloarcula vallismortis (Halobacterium vallismortis).